The sequence spans 147 residues: Large ribosomal subunit protein mL40 (147 aa).

Residues 1–26 constitute a mitochondrion transit peptide; sequence MLAQTFKKPHRAVLEQVSGTTVFIRN.

Belongs to the mitochondrion-specific ribosomal protein mL40 family. As to quaternary structure, component of the mitochondrial large ribosomal subunit (mt-LSU). Mature yeast 74S mitochondrial ribosomes consist of a small (37S) and a large (54S) subunit. The 37S small subunit contains a 15S ribosomal RNA (15S mt-rRNA) and 34 different proteins. The 54S large subunit contains a 21S rRNA (21S mt-rRNA) and 46 different proteins.

It localises to the mitochondrion. Its function is as follows. Component of the mitochondrial ribosome (mitoribosome), a dedicated translation machinery responsible for the synthesis of mitochondrial genome-encoded proteins, including at least some of the essential transmembrane subunits of the mitochondrial respiratory chain. The mitoribosomes are attached to the mitochondrial inner membrane and translation products are cotranslationally integrated into the membrane. The polypeptide is Large ribosomal subunit protein mL40 (MRPL28) (Saccharomyces cerevisiae (strain ATCC 204508 / S288c) (Baker's yeast)).